The chain runs to 312 residues: Methionyl-tRNA formyltransferase (312 aa).

A disordered region spans residues 34–54; sequence PDAASGRRGKPQPSPVAREAA. Residue 110-113 participates in (6S)-5,6,7,8-tetrahydrofolate binding; the sequence is SLLP.

Belongs to the Fmt family.

The catalysed reaction is L-methionyl-tRNA(fMet) + (6R)-10-formyltetrahydrofolate = N-formyl-L-methionyl-tRNA(fMet) + (6S)-5,6,7,8-tetrahydrofolate + H(+). Functionally, attaches a formyl group to the free amino group of methionyl-tRNA(fMet). The formyl group appears to play a dual role in the initiator identity of N-formylmethionyl-tRNA by promoting its recognition by IF2 and preventing the misappropriation of this tRNA by the elongation apparatus. In Mycobacterium tuberculosis (strain ATCC 25177 / H37Ra), this protein is Methionyl-tRNA formyltransferase.